A 125-amino-acid chain; its full sequence is Protein ApaG (125 aa).

An ApaG domain is found at 1–125 (MADSPRVCVQ…FRLAVPTLIH (125 aa)).

This chain is Protein ApaG, found in Cronobacter sakazakii (strain ATCC BAA-894) (Enterobacter sakazakii).